Here is a 325-residue protein sequence, read N- to C-terminus: Glutarate 2-hydroxylase (325 aa).

Fe cation contacts are provided by His160, Asp162, and His292.

It belongs to the glutarate hydroxylase family. As to quaternary structure, homotetramer. The cofactor is Fe(2+).

It catalyses the reaction glutarate + 2-oxoglutarate + O2 = (S)-2-hydroxyglutarate + succinate + CO2. Its pathway is amino-acid degradation. In terms of biological role, acts as an alpha-ketoglutarate-dependent dioxygenase catalyzing hydroxylation of glutarate (GA) to L-2-hydroxyglutarate (L2HG). Functions in a L-lysine degradation pathway that proceeds via cadaverine, glutarate and L-2-hydroxyglutarate. The polypeptide is Glutarate 2-hydroxylase (Salmonella typhimurium (strain SL1344)).